Here is a 272-residue protein sequence, read N- to C-terminus: Hematopoietically-expressed homeobox protein hhex (272 aa).

Positions 137-196 (RKGGQVRFSNDQTIELEKKFETQKYLSPPERKRLAKMLQLSERQVKTWFQNRRAKWRRLK) form a DNA-binding region, homeobox. The segment at 222–272 (CLSAEQKSRESSLDDPTSSPTSQGNLDSEVSDDSDQEVDIEGDKGYYNCAH) is disordered. A compositionally biased stretch (acidic residues) spans 250–261 (EVSDDSDQEVDI).

As to expression, first expressed in the dorsal endomesoderm of the gastrula stage embryo. The dorsal endomesoderm contributes to forming the embryonic liver, and expression continues in the liver throughout development. Also expressed in precursors of the developing thyroid gland, and beginning at the tailbud stage, expressed in the ventral region of the head. Also transiently expressed in the endothelial layer of developing vascular tissues of the embryo, beginning at the tailbud stages.

The protein resides in the nucleus. Recognizes the DNA sequence 5'-ATTAA-3'. Transcriptional repressor. Regulates the differentiation of both endothelial and blood cells. Probably plays a role in the proliferation of vascular endothelial cells during blood vessel development. Establishes anterior identity at two levels; acts early to enhance canonical wnt-signaling by repressing expression of tle4, and acts later to inhibit nodal-signaling by directly targeting nodal/nr1 and nodal2/nr2. May play a role in liver development. Induces heart development. In Xenopus laevis (African clawed frog), this protein is Hematopoietically-expressed homeobox protein hhex.